Reading from the N-terminus, the 978-residue chain is Peroxisomal ATPase PEX6 (978 aa).

The residue at position 119 (Arg-119) is an Omega-N-methylarginine. ATP contacts are provided by residues 470–477 and 742–749; these read GPPGSGKT and GPPGTGKT.

Belongs to the AAA ATPase family. In terms of assembly, interacts with PEX1; forming the PEX1-PEX6 AAA ATPase complex, which is composed of a heterohexamer formed by a trimer of PEX1-PEX6 dimers. Interacts with PEX26; interaction is direct and promotes recruitment to peroxisomal membranes. Interacts with ZFAND6.

The protein localises to the cytoplasm. It is found in the cytosol. Its subcellular location is the peroxisome membrane. The protein resides in the cell projection. It localises to the cilium. The protein localises to the photoreceptor outer segment. It catalyses the reaction ATP + H2O = ADP + phosphate + H(+). Functionally, component of the PEX1-PEX6 AAA ATPase complex, a protein dislocase complex that mediates the ATP-dependent extraction of the PEX5 receptor from peroxisomal membranes, an essential step for PEX5 recycling. Specifically recognizes PEX5 monoubiquitinated at 'Cys-11', and pulls it out of the peroxisome lumen through the PEX2-PEX10-PEX12 retrotranslocation channel. Extraction by the PEX1-PEX6 AAA ATPase complex is accompanied by unfolding of the TPR repeats and release of bound cargo from PEX5. This chain is Peroxisomal ATPase PEX6, found in Rattus norvegicus (Rat).